The primary structure comprises 211 residues: Large ribosomal subunit protein bL9 (211 aa).

Residues 180 to 211 form a disordered region; it reads DDIGAAGMDDDDDDAPAPAQADPSSEESSEED.

The protein belongs to the bacterial ribosomal protein bL9 family.

Binds to the 23S rRNA. The sequence is that of Large ribosomal subunit protein bL9 from Jannaschia sp. (strain CCS1).